Consider the following 189-residue polypeptide: Probable RNA 2'-phosphotransferase (189 aa).

Belongs to the KptA/TPT1 family.

Functionally, removes the 2'-phosphate from RNA via an intermediate in which the phosphate is ADP-ribosylated by NAD followed by a presumed transesterification to release the RNA and generate ADP-ribose 1''-2''-cyclic phosphate (APPR&gt;P). May function as an ADP-ribosylase. The chain is Probable RNA 2'-phosphotransferase from Streptomyces griseus subsp. griseus (strain JCM 4626 / CBS 651.72 / NBRC 13350 / KCC S-0626 / ISP 5235).